Here is a 101-residue protein sequence, read N- to C-terminus: Large ribosomal subunit protein uL24 (101 aa).

It belongs to the universal ribosomal protein uL24 family. Part of the 50S ribosomal subunit.

Its function is as follows. One of two assembly initiator proteins, it binds directly to the 5'-end of the 23S rRNA, where it nucleates assembly of the 50S subunit. One of the proteins that surrounds the polypeptide exit tunnel on the outside of the subunit. The polypeptide is Large ribosomal subunit protein uL24 (Clostridioides difficile (strain 630) (Peptoclostridium difficile)).